The sequence spans 1357 residues: DNA-directed RNA polymerase subunit beta (1357 aa).

The protein belongs to the RNA polymerase beta chain family. As to quaternary structure, the RNAP catalytic core consists of 2 alpha, 1 beta, 1 beta' and 1 omega subunit. When a sigma factor is associated with the core the holoenzyme is formed, which can initiate transcription.

It carries out the reaction RNA(n) + a ribonucleoside 5'-triphosphate = RNA(n+1) + diphosphate. In terms of biological role, DNA-dependent RNA polymerase catalyzes the transcription of DNA into RNA using the four ribonucleoside triphosphates as substrates. In Pseudomonas putida (strain GB-1), this protein is DNA-directed RNA polymerase subunit beta.